The chain runs to 816 residues: MGDTVVEPAPLKPTSEPTSGPPGNNGGSLLSVITEGVGELSVIDPEVAQKACQEVLEKVKLLHGGVAVSSRGTPLELVNGDGVDSEIRCLDDPPAQIREEEDEMGAAVASGTAKGARRRRQNNSAKQSWLLRLFESKLFDISMAISYLYNSKEPGVQAYIGNRLFCFRNEDVDFYLPQLLNMYIHMDEDVGDAIKPYIVHRCRQSINFSLQCALLLGAYSSDMHISTQRHSRGTKLRKLILSDELKPAHRKRELPSLSPAPDTGLSPSKRTHQRSKSDATASISLSSNLKRTASNPKVENEDEELSSSTESIDNSFSSPVRLAPEREFIKSLMAIGKRLATLPTKEQKTQRLISELSLLNHKLPARVWLPTAGFDHHVVRVPHTQAVVLNSKDKAPYLIYVEVLECENFDTTSVPARIPENRIRSTRSVENLPECGITHEQRAGSFSTVPNYDNDDEAWSVDDIGELQVELPEVHTNSCDNISQFSVDSITSQESKEPVFIAAGDIRRRLSEQLAHTPTAFKRDPEDPSAVALKEPWQEKVRRIREGSPYGHLPNWRLLSVIVKCGDDLRQELLAFQVLKQLQSIWEQERVPLWIKPYKILVISADSGMIEPVVNAVSIHQVKKQSQLSLLDYFLQEHGSYTTEAFLSAQRNFVQSCAGYCLVCYLLQVKDRHNGNILLDAEGHIIHIDFGFILSSSPRNLGFETSAFKLTTEFVDVMGGLDGDMFNYYKMLMLQGLIAARKHMDKVVQIVEIMQQGSQLPCFHGSSTIRNLKERFHMSMTEEQLQLLVEQMVDGSMRSITTKLYDGFQYLTNGIM.

The interval 1–30 (MGDTVVEPAPLKPTSEPTSGPPGNNGGSLL) is disordered. The residue at position 2 (glycine 2) is an N-acetylglycine. Residues 29–242 (LLSVITEGVG…GTKLRKLILS (214 aa)) enclose the PIK helical domain. The interaction with ACBD3 stretch occupies residues 41-67 (SVIDPEVAQKACQEVLEKVKLLHGGVA). 2 disordered regions span residues 101-120 (EDEMGAAVASGTAKGARRRR) and 248-318 (AHRK…SFSS). Serine 258 carries the phosphoserine modification. Threonine 263 bears the Phosphothreonine mark. Phosphoserine is present on residues serine 266, serine 275, serine 277, serine 284, and serine 294. 2 stretches are compositionally biased toward polar residues: residues 278 to 297 (DATASISLSSNLKRTASNPK) and 306 to 318 (SSSTESIDNSFSS). The residue at position 428 (serine 428) is a Phosphoserine. Threonine 438 is modified (phosphothreonine). At serine 511 the chain carries Phosphoserine. Phosphothreonine occurs at positions 517 and 519. Residues 535 to 801 (EPWQEKVRRI…MVDGSMRSIT (267 aa)) form the PI3K/PI4K catalytic domain. Positions 541 to 547 (VRRIREG) are G-loop. The interval 668 to 676 (QVKDRHNGN) is catalytic loop. Positions 687-711 (HIDFGFILSSSPRNLGFETSAFKLT) are activation loop.

It belongs to the PI3/PI4-kinase family. Type III PI4K subfamily. As to quaternary structure, interacts with ARF1 and ARF3 in the Golgi complex, but not with ARF4, ARF5 or ARF6. Interacts with NCS1/FREQ in a calcium-independent manner. Interacts with CALN1/CABP8 and CALN2/CABP7; in a calcium-dependent manner; this interaction competes with NCS1/FREQ binding. Interacts with ACBD3. Interacts with ARMH3, YWHAB, YWHAE, YWHAG, YWHAH, YWHAQ, YWHAZ and SFN. Interacts with GGA2 (via VHS domain); the interaction is important for PI4KB location at the Golgi apparatus membrane. Interacts with ATG9A. In terms of assembly, (Microbial infection) Interacts with Aichi virus protein 3A. Part of a complex Aichi virus protein 3A/ACBD3/PI4KB that allows the synthesis of PI4P at the viral RNA replication sites. Requires Mg(2+) as cofactor. Mn(2+) serves as cofactor. In terms of tissue distribution, widely expressed with highest levels in heart, skeletal muscle, pancreas, testis and ovary. Weakly expressed in liver. Expressed in the innear ear in the epithelium of the spinal organ of corti.

The protein localises to the endomembrane system. Its subcellular location is the mitochondrion outer membrane. It localises to the rough endoplasmic reticulum membrane. The protein resides in the golgi apparatus. It is found in the golgi apparatus membrane. The protein localises to the cytoplasm. Its subcellular location is the perinuclear region. The enzyme catalyses a 1,2-diacyl-sn-glycero-3-phospho-(1D-myo-inositol) + ATP = a 1,2-diacyl-sn-glycero-3-phospho-(1D-myo-inositol 4-phosphate) + ADP + H(+). With respect to regulation, inhibited by wortmannin and adenosine. Increased kinase activity upon interaction with NCS1/FREQ. Its activity is regulated as follows. (Microbial infection) Activated by Aichi virus protein 3A, this activation is sensitized by ACBD3. Functionally, phosphorylates phosphatidylinositol (PI) in the first committed step in the production of the second messenger inositol-1,4,5,-trisphosphate (PIP). May regulate Golgi disintegration/reorganization during mitosis, possibly via its phosphorylation. Involved in Golgi-to-plasma membrane trafficking. May play an important role in the inner ear development. In terms of biological role, (Microbial infection) Plays an essential role in Aichi virus RNA replication. Recruited by ACBD3 at the viral replication sites. (Microbial infection) Required for cellular spike-mediated entry of human coronavirus SARS-CoV. The polypeptide is Phosphatidylinositol 4-kinase beta (Homo sapiens (Human)).